Here is a 92-residue protein sequence, read N- to C-terminus: DNA-directed RNA polymerase subunit omega (92 aa).

This sequence belongs to the RNA polymerase subunit omega family. As to quaternary structure, the RNAP catalytic core consists of 2 alpha, 1 beta, 1 beta' and 1 omega subunit. When a sigma factor is associated with the core the holoenzyme is formed, which can initiate transcription.

It catalyses the reaction RNA(n) + a ribonucleoside 5'-triphosphate = RNA(n+1) + diphosphate. Functionally, promotes RNA polymerase assembly. Latches the N- and C-terminal regions of the beta' subunit thereby facilitating its interaction with the beta and alpha subunits. The sequence is that of DNA-directed RNA polymerase subunit omega from Shewanella frigidimarina (strain NCIMB 400).